Reading from the N-terminus, the 327-residue chain is Small ribosomal subunit protein uS4m (327 aa).

The S4 RNA-binding domain occupies 96–154 (SRLDMSIHRALFASSALQARQLVLHGKVHVNGKPERRAYRQLLPGDLVTVDQKSVMNCV). Positions 156 to 173 (ASSNNTPSIQDGKQTEQV) are enriched in polar residues. Positions 156–199 (ASSNNTPSIQDGKQTEQVSSKDGENEKKKDNDDDLFEQTSNGKL) are disordered. The segment covering 174–186 (SSKDGENEKKKDN) has biased composition (basic and acidic residues).

This sequence belongs to the universal ribosomal protein uS4 family. In terms of assembly, component of the mitochondrial small ribosomal subunit (mt-SSU). Mature yeast 74S mitochondrial ribosomes consist of a small (37S) and a large (54S) subunit. The 37S small subunit contains a 15S ribosomal RNA (15S mt-rRNA) and at least 32 different proteins. The 54S large subunit contains a 21S rRNA (21S mt-rRNA) and at least 45 different proteins. uS3m, uS4m and uS5m form the narrow entry site of the mRNA channel.

The protein localises to the mitochondrion. Its function is as follows. Component of the mitochondrial ribosome (mitoribosome), a dedicated translation machinery responsible for the synthesis of mitochondrial genome-encoded proteins, including at least some of the essential transmembrane subunits of the mitochondrial respiratory chain. The mitoribosomes are attached to the mitochondrial inner membrane and translation products are cotranslationally integrated into the membrane. The sequence is that of Small ribosomal subunit protein uS4m (nam9) from Schizosaccharomyces pombe (strain 972 / ATCC 24843) (Fission yeast).